Consider the following 185-residue polypeptide: DNA-directed RNA polymerase 22 kDa subunit (185 aa).

Belongs to the poxviridae DNA-directed RNA polymerase 22 kDa subunit family. The DNA-dependent RNA polymerase used for intermediate and late genes expression consists of eight subunits Rpo30/OPG66, Rpo7/OPG90, Rpo22/OPG103, Rpo147/OPG105, Rpo18/OPG119, Rpo19/OPG131, Rpo132/OPG151 and Rpo35/OPG156. The same holoenzyme, with the addition of the transcription-specificity factor OPG109, is used for early gene expression.

The protein resides in the virion. The enzyme catalyses RNA(n) + a ribonucleoside 5'-triphosphate = RNA(n+1) + diphosphate. Its function is as follows. Part of the DNA-dependent RNA polymerase which catalyzes the transcription of viral DNA into RNA using the four ribonucleoside triphosphates as substrates. Responsible for the transcription of early, intermediate and late genes. DNA-dependent RNA polymerase associates with the early transcription factor (ETF), itself composed of OPG118 and OPG133, thereby allowing the early genes transcription. Late transcription, and probably also intermediate transcription, require newly synthesized RNA polymerase. The protein is DNA-directed RNA polymerase 22 kDa subunit (OPG103) of Cynomys gunnisoni (Gunnison's prairie dog).